We begin with the raw amino-acid sequence, 297 residues long: tRNA pseudouridine synthase B (297 aa).

The active-site Nucleophile is the Asp-41.

This sequence belongs to the pseudouridine synthase TruB family. Type 1 subfamily.

It carries out the reaction uridine(55) in tRNA = pseudouridine(55) in tRNA. Functionally, responsible for synthesis of pseudouridine from uracil-55 in the psi GC loop of transfer RNAs. The protein is tRNA pseudouridine synthase B of Synechococcus sp. (strain CC9311).